The primary structure comprises 447 residues: MITIKKGLDIPISGAPEQVIYEAPAVHHVALLGEEFPGLKPTMLVKVGDHVKKGQPLFENKKNPGVIFTAPASGLVTEIHRGHQRVFQALVIAQDPTIGAVSFQRYQDEELPQLSREQVQQQLLNSGMWTALRTRPYSKSPVPGSVPKAIFVTAMDTNPLAASAELIIEQQPVAFVNGLTLLSRLTDGKVYVCKGENSLPHSHVANVEERVFTGPHPAGLAGTHIHFTEPASAKKTLWHINYQDVIAIGHLFASGELYNERIVSLAGPGVSAPRLVRTQLGACLSELTRNQLLAGEQRIISGSVLSGNKAAEVHDYLGRFHLQVSVLPEGREKVFLGWIMPGQDKFSVTRSFMGHLSNVKRLVFTTAKNGSERAMVPIGNYEKIMPLDILPTLLLRDLAAGDTDSAQQLGCLELDEEDLALCTFVCPGKTEYGPLLRKCLTKIELEG.

It belongs to the NqrA family. Composed of six subunits; NqrA, NqrB, NqrC, NqrD, NqrE and NqrF.

It carries out the reaction a ubiquinone + n Na(+)(in) + NADH + H(+) = a ubiquinol + n Na(+)(out) + NAD(+). In terms of biological role, NQR complex catalyzes the reduction of ubiquinone-1 to ubiquinol by two successive reactions, coupled with the transport of Na(+) ions from the cytoplasm to the periplasm. NqrA to NqrE are probably involved in the second step, the conversion of ubisemiquinone to ubiquinol. This chain is Na(+)-translocating NADH-quinone reductase subunit A, found in Tolumonas auensis (strain DSM 9187 / NBRC 110442 / TA 4).